The chain runs to 215 residues: Ras-related protein Rab-42 (215 aa).

G19, G21, K22, T23, and T44 together coordinate GTP. 3 residues coordinate Mg(2+): T23, T44, and D68. GTP contacts are provided by G71, K128, D130, A157, and K158. The disordered stretch occupies residues 196–215 (HRSPNPRSSSRKQDSGTCQC). Residues C213 and C215 are each lipidated (S-geranylgeranyl cysteine).

The protein belongs to the small GTPase superfamily. Rab family. Mg(2+) serves as cofactor.

It localises to the membrane. The catalysed reaction is GTP + H2O = GDP + phosphate + H(+). Regulated by guanine nucleotide exchange factors (GEFs) which promote the exchange of bound GDP for free GTP. Regulated by GTPase activating proteins (GAPs) which increase the GTP hydrolysis activity. Inhibited by GDP dissociation inhibitors (GDIs). Its function is as follows. The small GTPases Rab are key regulators of intracellular membrane trafficking, from the formation of transport vesicles to their fusion with membranes. Rabs cycle between an inactive GDP-bound form and an active GTP-bound form that is able to recruit to membranes different sets of downstream effectors directly responsible for vesicle formation, movement, tethering and fusion. The physiological function of RAB42 remains undefined. The sequence is that of Ras-related protein Rab-42 from Mus musculus (Mouse).